The chain runs to 293 residues: Ribosomal protein L11 methyltransferase (293 aa).

Positions 145, 166, 188, and 230 each coordinate S-adenosyl-L-methionine.

Belongs to the methyltransferase superfamily. PrmA family.

It is found in the cytoplasm. The enzyme catalyses L-lysyl-[protein] + 3 S-adenosyl-L-methionine = N(6),N(6),N(6)-trimethyl-L-lysyl-[protein] + 3 S-adenosyl-L-homocysteine + 3 H(+). Functionally, methylates ribosomal protein L11. In Shewanella denitrificans (strain OS217 / ATCC BAA-1090 / DSM 15013), this protein is Ribosomal protein L11 methyltransferase.